The sequence spans 385 residues: Cytochrome b (385 aa).

4 helical membrane passes run 34–54 (FGSILGLCLFLQIATGLILTM), 78–99 (WFIRNFHITGASLFFSCMFIHI), 114–134 (WYSGVILFICAMVTAFFGYVL), and 179–199 (FLVLHFLVPFLMIAVSLTHLL). Heme b-binding residues include H84 and H98. Heme b-binding residues include H183 and H197. H202 provides a ligand contact to a ubiquinone. The next 4 helical transmembrane spans lie at 227–247 (FKDILGFLITLSLIFLGSTLF), 289–309 (LMGVFALIMSLSVLLFMPFLI), 321–341 (FMQFTFWLMISNFILLSWLGA), and 348–368 (YTIMSQVTSFLYFFIFLFLFP).

Belongs to the cytochrome b family. The cytochrome bc1 complex contains 3 respiratory subunits (MT-CYB, CYC1 and UQCRFS1), 2 core proteins (UQCRC1 and UQCRC2) and probably 6 low-molecular weight proteins. Heme b is required as a cofactor.

It is found in the mitochondrion inner membrane. In terms of biological role, component of the ubiquinol-cytochrome c reductase complex (complex III or cytochrome b-c1 complex) that is part of the mitochondrial respiratory chain. The b-c1 complex mediates electron transfer from ubiquinol to cytochrome c. Contributes to the generation of a proton gradient across the mitochondrial membrane that is then used for ATP synthesis. In Myxine glutinosa (Atlantic hagfish), this protein is Cytochrome b (MT-CYB).